The following is a 495-amino-acid chain: Probable plastidic glucose transporter 3 (495 aa).

Transmembrane regions (helical) follow at residues 55-75 (LPHV…LGVV), 97-117 (LVVS…GLVA), 131-151 (LPMI…GMLL), 154-174 (FLVG…VTEV), 183-203 (YGSS…FAGI), 214-234 (ICFW…ELCV), 294-314 (VVFI…NAVF), 330-350 (SANI…VVLM), 357-377 (VLLI…AIAY), 384-404 (FGTL…FATG), 425-445 (ALAV…LLFL), and 451-471 (LGSV…VIFV).

It belongs to the major facilitator superfamily. Sugar transporter (TC 2.A.1.1) family.

Its subcellular location is the plastid. It localises to the chloroplast membrane. In terms of biological role, may be involved in the efflux of glucose towards the cytosol. This Arabidopsis thaliana (Mouse-ear cress) protein is Probable plastidic glucose transporter 3.